The sequence spans 437 residues: Ribosomal protein uS12 methylthiotransferase RimO (437 aa).

An MTTase N-terminal domain is found at 4-114 (PRVSFVSLGC…VMNAVHEVAP (111 aa)). [4Fe-4S] cluster contacts are provided by cysteine 13, cysteine 49, cysteine 78, cysteine 145, cysteine 149, and cysteine 152. A Radical SAM core domain is found at 131–369 (LTPRHYAYLK…MAKQQQISTN (239 aa)). One can recognise a TRAM domain in the interval 372-437 (KKKVGKRLPV…DAYDLHGTAV (66 aa)).

Belongs to the methylthiotransferase family. RimO subfamily. Requires [4Fe-4S] cluster as cofactor.

The protein localises to the cytoplasm. It catalyses the reaction L-aspartate(89)-[ribosomal protein uS12]-hydrogen + (sulfur carrier)-SH + AH2 + 2 S-adenosyl-L-methionine = 3-methylsulfanyl-L-aspartate(89)-[ribosomal protein uS12]-hydrogen + (sulfur carrier)-H + 5'-deoxyadenosine + L-methionine + A + S-adenosyl-L-homocysteine + 2 H(+). Catalyzes the methylthiolation of an aspartic acid residue of ribosomal protein uS12. The polypeptide is Ribosomal protein uS12 methylthiotransferase RimO (Brucella abortus (strain S19)).